A 163-amino-acid polypeptide reads, in one-letter code: I-Kappa-B like protein N3 (163 aa).

2 ANK repeats span residues 62-95 (LGDT…NLNT) and 100-130 (NGDT…NLQT).

Belongs to the polydnaviridae I-Kappa-B like protein family.

Its function is as follows. Suppresses the host immune response through NF-kappa-B inactivation. Possesses ankyrin repeat domains required for NF-kappa-B binding but lacks the regulatory regions required for dissociation from NF-kappa-B and degradation. Therefore, prevents host NF-kappa-B release and subsequent activation. The polypeptide is I-Kappa-B like protein N3 (N6) (Microplitis demolitor (Parasitoid wasp)).